A 370-amino-acid chain; its full sequence is uncharacterized protein (370 aa).

N-acetylmethionine is present on Met-1.

This sequence belongs to the ornithine cyclodeaminase/mu-crystallin family.

This is an uncharacterized protein from Saccharomyces cerevisiae (strain ATCC 204508 / S288c) (Baker's yeast).